The following is a 274-amino-acid chain: Rhamnulose-1-phosphate aldolase (274 aa).

Residue Glu-117 is part of the active site. Zn(2+) is bound by residues His-141, His-143, and His-212.

This sequence belongs to the aldolase class II family. RhaD subfamily. As to quaternary structure, homotetramer. Requires Zn(2+) as cofactor.

The protein localises to the cytoplasm. The enzyme catalyses L-rhamnulose 1-phosphate = (S)-lactaldehyde + dihydroxyacetone phosphate. It participates in carbohydrate degradation; L-rhamnose degradation; glycerone phosphate from L-rhamnose: step 3/3. Functionally, catalyzes the reversible cleavage of L-rhamnulose-1-phosphate to dihydroxyacetone phosphate (DHAP) and L-lactaldehyde. This is Rhamnulose-1-phosphate aldolase from Escherichia coli (strain K12 / MC4100 / BW2952).